A 442-amino-acid polypeptide reads, in one-letter code: C4-dicarboxylate transport protein 4 (442 aa).

Transmembrane regions (helical) follow at residues 20 to 40 (ILYV…YFYP), 53 to 73 (FIAL…VHGI), 90 to 110 (LIYF…VGEV), 160 to 180 (GDLL…AFLG), 209 to 229 (PVGA…GSLL), and 233 to 253 (ALIG…LGAI).

Belongs to the dicarboxylate/amino acid:cation symporter (DAACS) (TC 2.A.23) family.

It localises to the cell inner membrane. Functionally, responsible for the transport of dicarboxylates such as succinate, fumarate, and malate from the periplasm across the membrane. This Bradyrhizobium diazoefficiens (strain JCM 10833 / BCRC 13528 / IAM 13628 / NBRC 14792 / USDA 110) protein is C4-dicarboxylate transport protein 4.